A 24-amino-acid polypeptide reads, in one-letter code: Large ribosomal subunit protein uL30 (24 aa).

This sequence belongs to the universal ribosomal protein uL30 family. As to quaternary structure, part of the 50S ribosomal subunit.

This Ectopseudomonas mendocina (Pseudomonas mendocina) protein is Large ribosomal subunit protein uL30 (rpmD).